The following is a 229-amino-acid chain: NAD(P)H-hydrate epimerase (229 aa).

In terms of domain architecture, YjeF N-terminal spans 10–217 (AINVDQELFN…ALQRKYDLNL (208 aa)). Residue 60 to 64 (NNGGD) participates in (6S)-NADPHX binding. Residues Asn61 and Asp125 each contribute to the K(+) site. (6S)-NADPHX-binding positions include 129-135 (GFSFKPP) and Asp158. Ser161 serves as a coordination point for K(+).

This sequence belongs to the NnrE/AIBP family. The cofactor is K(+).

The catalysed reaction is (6R)-NADHX = (6S)-NADHX. It catalyses the reaction (6R)-NADPHX = (6S)-NADPHX. Catalyzes the epimerization of the S- and R-forms of NAD(P)HX, a damaged form of NAD(P)H that is a result of enzymatic or heat-dependent hydration. This is a prerequisite for the S-specific NAD(P)H-hydrate dehydratase to allow the repair of both epimers of NAD(P)HX. The polypeptide is NAD(P)H-hydrate epimerase (Drosophila ananassae (Fruit fly)).